Here is a 449-residue protein sequence, read N- to C-terminus: MSHITFDYSKVLESFAGQHEIDFLQGQVTEADKLLREGTGPGSDFLGWLDLPENYDKEEFARILTAAEKIKSDSEVLVVIGIGGSYLGAKAAIDFLNHHFANLQTAKERKAPQILYAGNSISSTYLADLVEYVQDKEFSVNVISKSGTTTEPAIAFRVFKELLVKKYGQEEANKRIYATTDKVKGAVKVEADANNWETFVVPDNVGGRFSVLTAVGLLPIAASGADITALMEGANAARKDLSSDKISENIAYQYAAVRNVLYRKGYITEILANYEPSLQYFGEWWKQLAGESEGKDQKGIYPTSANFSTDLHSLGQFIQEGYRNLFETVIRVDNPRKNVIIPELAEDLDGLGYLQGKDVDFVNKKATDGVLLAHTDGGVPNMFVTLPAQDEFTLGYTIYFFELAIAVSGYMNAVNPFDQPGVEAYKRNMFALLGKPGFEALSAELNARL.

The active-site Proton donor is glutamate 291. Catalysis depends on residues histidine 312 and lysine 426.

The protein belongs to the GPI family.

The protein localises to the cytoplasm. It carries out the reaction alpha-D-glucose 6-phosphate = beta-D-fructose 6-phosphate. Its pathway is carbohydrate biosynthesis; gluconeogenesis. The protein operates within carbohydrate degradation; glycolysis; D-glyceraldehyde 3-phosphate and glycerone phosphate from D-glucose: step 2/4. Its function is as follows. Catalyzes the reversible isomerization of glucose-6-phosphate to fructose-6-phosphate. The protein is Glucose-6-phosphate isomerase of Streptococcus pyogenes serotype M5 (strain Manfredo).